Here is a 280-residue protein sequence, read N- to C-terminus: 2-dehydro-3-deoxyphosphooctonate aldolase (280 aa).

Belongs to the KdsA family.

The protein localises to the cytoplasm. The catalysed reaction is D-arabinose 5-phosphate + phosphoenolpyruvate + H2O = 3-deoxy-alpha-D-manno-2-octulosonate-8-phosphate + phosphate. It participates in carbohydrate biosynthesis; 3-deoxy-D-manno-octulosonate biosynthesis; 3-deoxy-D-manno-octulosonate from D-ribulose 5-phosphate: step 2/3. Its pathway is bacterial outer membrane biogenesis; lipopolysaccharide biosynthesis. The sequence is that of 2-dehydro-3-deoxyphosphooctonate aldolase from Nitrosococcus oceani (strain ATCC 19707 / BCRC 17464 / JCM 30415 / NCIMB 11848 / C-107).